Here is a 319-residue protein sequence, read N- to C-terminus: Type II methyltransferase M.MpnI (319 aa).

Belongs to the N(4)/N(6)-methyltransferase family.

It catalyses the reaction a 2'-deoxyadenosine in DNA + S-adenosyl-L-methionine = an N(6)-methyl-2'-deoxyadenosine in DNA + S-adenosyl-L-homocysteine + H(+). Functionally, a methylase that recognizes the double-stranded sequence 5'-CTAT-3' and methylates A-3 on one strand; probably responsible for all of the methylation on this site in the genome. The chain is Type II methyltransferase M.MpnI from Mycoplasma pneumoniae (strain ATCC 29342 / M129 / Subtype 1) (Mycoplasmoides pneumoniae).